The chain runs to 730 residues: Pentatricopeptide repeat-containing protein At5g64320, mitochondrial (730 aa).

The N-terminal 18 residues, 1–18 (MVMLARSKLALDVSRRSQ), are a transit peptide targeting the mitochondrion. 17 PPR repeats span residues 110-144 (SFDV…GIVF), 145-175 (KESL…MRNV), 181-215 (TFKS…KIPP), 216-250 (TLFT…GCVP), 251-285 (NSVI…GCVP), 286-320 (DAET…GFAP), 321-351 (DDIT…IPKP), 352-387 (EIVI…GIVP), 388-422 (DVCT…GCKP), 423-457 (NVYS…GLKP), 458-492 (NTVG…GCKP), 493-527 (DVYT…GVVA), 528-562 (NTVT…GSPL), 563-597 (DEIT…GHAP), 598-632 (SNIS…GSTP), 633-667 (DIVT…GIPP), and 668-702 (DTVT…GFVP).

The protein belongs to the PPR family. P subfamily.

The protein localises to the mitochondrion. This Arabidopsis thaliana (Mouse-ear cress) protein is Pentatricopeptide repeat-containing protein At5g64320, mitochondrial.